We begin with the raw amino-acid sequence, 443 residues long: Multidrug resistance protein MdtA (443 aa).

The signal sequence occupies residues 1–24; that stretch reads MKAQSKRTSRLLILLGIAVAIIVA. Residues 36–46 are compositionally biased toward polar residues; the sequence is DGSTGAQQHAV. Disordered stretches follow at residues 36–57 and 398–443; these read DGST…GGRR and TPRS…AEKS. Positions 409-419 are enriched in basic and acidic residues; sequence AAEKPATAEKA. Residues 427 to 443 are compositionally biased toward low complexity; it reads SATGASAGSTTTAAEKS.

It belongs to the membrane fusion protein (MFP) (TC 8.A.1) family. In terms of assembly, part of a tripartite efflux system composed of MdtA, MdtB and MdtC.

It localises to the cell inner membrane. This chain is Multidrug resistance protein MdtA, found in Yersinia enterocolitica serotype O:8 / biotype 1B (strain NCTC 13174 / 8081).